The primary structure comprises 246 residues: Cell division protein ZapD (246 aa).

Belongs to the ZapD family. In terms of assembly, interacts with FtsZ.

It is found in the cytoplasm. Functionally, cell division factor that enhances FtsZ-ring assembly. Directly interacts with FtsZ and promotes bundling of FtsZ protofilaments, with a reduction in FtsZ GTPase activity. In Vibrio parahaemolyticus serotype O3:K6 (strain RIMD 2210633), this protein is Cell division protein ZapD.